Consider the following 148-residue polypeptide: Endothelial differentiation-related factor 1 homolog (148 aa).

Residues Met-1–Gln-26 are disordered. One can recognise an HTH cro/C1-type domain in the interval Ile-81–Lys-135. Positions Gln-92–Ser-111 form a DNA-binding region, H-T-H motif.

The protein localises to the nucleus. Probable transcriptional coactivator. This chain is Endothelial differentiation-related factor 1 homolog (EDF1), found in Gallus gallus (Chicken).